A 145-amino-acid chain; its full sequence is MYPAHLLVLLAVCVSLLGASAISNQPRNLVQFSELIQCVNKGKRATYHYMDYGCYCGKGGSGTPVDALDRCCKTHDDCYGQAEKKGCFPFLTLYNFGCFPGGPTCGKGNTCQRFVCDCDLKAALCFAKSPYNNNNYNIDTKKRCK.

Residues 1–21 (MYPAHLLVLLAVCVSLLGASA) form the signal peptide. A propeptide spanning residues 22-27 (ISNQPR) is cleaved from the precursor. 7 disulfide bridges follow: cysteine 38-cysteine 98, cysteine 54-cysteine 144, cysteine 56-cysteine 72, cysteine 71-cysteine 125, cysteine 78-cysteine 118, cysteine 87-cysteine 111, and cysteine 105-cysteine 116. Ca(2+) is bound by residues tyrosine 55, glycine 57, and glycine 59. Histidine 75 is a catalytic residue. Residue aspartate 76 coordinates Ca(2+). Residue aspartate 119 is part of the active site.

This sequence belongs to the phospholipase A2 family. Group I subfamily. D49 sub-subfamily. The cofactor is Ca(2+). Expressed by the venom gland.

The protein localises to the secreted. The enzyme catalyses a 1,2-diacyl-sn-glycero-3-phosphocholine + H2O = a 1-acyl-sn-glycero-3-phosphocholine + a fatty acid + H(+). In terms of biological role, snake venom phospholipase A2 (PLA2) that inhibits neuromuscular transmission by blocking acetylcholine release from the nerve termini. PLA2 catalyzes the calcium-dependent hydrolysis of the 2-acyl groups in 3-sn-phosphoglycerides. The sequence is that of Basic phospholipase A2 PC17 from Laticauda colubrina (Yellow-lipped sea krait).